The following is a 403-amino-acid chain: Argininosuccinate synthase (403 aa).

ATP contacts are provided by residues 13–21 (AYSGGLDTS) and Ala40. The L-citrulline site is built by Tyr91 and Ser96. Gly121 provides a ligand contact to ATP. Thr123, Asn127, and Asp128 together coordinate L-aspartate. Asn127 contributes to the L-citrulline binding site. Arg131, Ser180, Ser189, Glu265, and Tyr277 together coordinate L-citrulline.

It belongs to the argininosuccinate synthase family. Type 1 subfamily. In terms of assembly, homotetramer.

It is found in the cytoplasm. The enzyme catalyses L-citrulline + L-aspartate + ATP = 2-(N(omega)-L-arginino)succinate + AMP + diphosphate + H(+). The protein operates within amino-acid biosynthesis; L-arginine biosynthesis; L-arginine from L-ornithine and carbamoyl phosphate: step 2/3. The protein is Argininosuccinate synthase of Leptospira interrogans serogroup Icterohaemorrhagiae serovar Lai (strain 56601).